Consider the following 473-residue polypeptide: Photosystem II CP43 reaction center protein (473 aa).

Residues 1 to 14 constitute a propeptide that is removed on maturation; it reads MKILYSLRRFYHVE. The residue at position 15 (Thr15) is an N-acetylthreonine. At Thr15 the chain carries Phosphothreonine. The next 5 helical transmembrane spans lie at 69-93, 134-155, 178-200, 255-275, and 291-312; these read LFEVAHFVPEKPMYEQGLILLPHLA, LLGPETLEESFPFFGYVWKDRN, KALYFGGVYDTWAPGGGDVRKIT, KPFAWARRAFVWSGEAYLSYS, and WFNNTAYSSEFYGPTGPEASQA. Glu367 is a binding site for [CaMn4O5] cluster. Residues 447 to 471 form a helical membrane-spanning segment; sequence RARAAAAGFEKGIDRDLEPVLYMNP.

Belongs to the PsbB/PsbC family. PsbC subfamily. In terms of assembly, PSII is composed of 1 copy each of membrane proteins PsbA, PsbB, PsbC, PsbD, PsbE, PsbF, PsbH, PsbI, PsbJ, PsbK, PsbL, PsbM, PsbT, PsbX, PsbY, PsbZ, Psb30/Ycf12, at least 3 peripheral proteins of the oxygen-evolving complex and a large number of cofactors. It forms dimeric complexes. The cofactor is Binds multiple chlorophylls and provides some of the ligands for the Ca-4Mn-5O cluster of the oxygen-evolving complex. It may also provide a ligand for a Cl- that is required for oxygen evolution. PSII binds additional chlorophylls, carotenoids and specific lipids.. Phosphorylated on threonine residue(s); phosphorylation increases with increasing light levels.

Its subcellular location is the plastid. It is found in the chloroplast thylakoid membrane. One of the components of the core complex of photosystem II (PSII). It binds chlorophyll and helps catalyze the primary light-induced photochemical processes of PSII. PSII is a light-driven water:plastoquinone oxidoreductase, using light energy to abstract electrons from H(2)O, generating O(2) and a proton gradient subsequently used for ATP formation. This chain is Photosystem II CP43 reaction center protein, found in Secale cereale (Rye).